We begin with the raw amino-acid sequence, 234 residues long: Large ribosomal subunit protein uL1 (234 aa).

Belongs to the universal ribosomal protein uL1 family. In terms of assembly, part of the 50S ribosomal subunit.

In terms of biological role, binds directly to 23S rRNA. The L1 stalk is quite mobile in the ribosome, and is involved in E site tRNA release. Functionally, protein L1 is also a translational repressor protein, it controls the translation of the L11 operon by binding to its mRNA. The sequence is that of Large ribosomal subunit protein uL1 from Maridesulfovibrio salexigens (strain ATCC 14822 / DSM 2638 / NCIMB 8403 / VKM B-1763) (Desulfovibrio salexigens).